Consider the following 349-residue polypeptide: Isopentenyl-diphosphate delta-isomerase (349 aa).

Arg6–Lys7 is a binding site for substrate. FMN is bound by residues Ala62 to Thr64, Ser93, and Asn122. Position 152 (Gln152) interacts with substrate. Glu153 lines the Mg(2+) pocket. FMN contacts are provided by residues Lys184, Thr214, Gly258 to Gly259, and Ala280 to Gly281.

The protein belongs to the IPP isomerase type 2 family. In terms of assembly, homooctamer. Dimer of tetramers. It depends on FMN as a cofactor. NADPH is required as a cofactor. Mg(2+) serves as cofactor.

Its subcellular location is the cytoplasm. It catalyses the reaction isopentenyl diphosphate = dimethylallyl diphosphate. Its function is as follows. Involved in the biosynthesis of isoprenoids. Catalyzes the 1,3-allylic rearrangement of the homoallylic substrate isopentenyl (IPP) to its allylic isomer, dimethylallyl diphosphate (DMAPP). The chain is Isopentenyl-diphosphate delta-isomerase from Bacillus thuringiensis subsp. konkukian (strain 97-27).